The primary structure comprises 456 residues: Bifunctional protein GlmU (456 aa).

The interval 1 to 228 (MPQNTLNIVI…SHLAAGVNNK (228 aa)) is pyrophosphorylase. UDP-N-acetyl-alpha-D-glucosamine contacts are provided by residues 11–14 (LAAG), Lys-25, Gln-75, 80–81 (GT), 102–104 (YGD), Gly-138, Glu-153, Asn-168, and Asn-226. Asp-104 serves as a coordination point for Mg(2+). Asn-226 is a Mg(2+) binding site. The tract at residues 229–249 (LQLAELERIFQTEQAQELLKA) is linker. Positions 250–456 (GVTLRDPARF…GWVRPEKNKQ (207 aa)) are N-acetyltransferase. UDP-N-acetyl-alpha-D-glucosamine is bound by residues Arg-332 and Lys-350. His-362 (proton acceptor) is an active-site residue. Positions 365 and 376 each coordinate UDP-N-acetyl-alpha-D-glucosamine. Residues Ala-379, 385–386 (NY), Ser-404, Ala-422, and Arg-439 each bind acetyl-CoA.

In the N-terminal section; belongs to the N-acetylglucosamine-1-phosphate uridyltransferase family. This sequence in the C-terminal section; belongs to the transferase hexapeptide repeat family. In terms of assembly, homotrimer. Requires Mg(2+) as cofactor.

It is found in the cytoplasm. It carries out the reaction alpha-D-glucosamine 1-phosphate + acetyl-CoA = N-acetyl-alpha-D-glucosamine 1-phosphate + CoA + H(+). It catalyses the reaction N-acetyl-alpha-D-glucosamine 1-phosphate + UTP + H(+) = UDP-N-acetyl-alpha-D-glucosamine + diphosphate. The protein operates within nucleotide-sugar biosynthesis; UDP-N-acetyl-alpha-D-glucosamine biosynthesis; N-acetyl-alpha-D-glucosamine 1-phosphate from alpha-D-glucosamine 6-phosphate (route II): step 2/2. It participates in nucleotide-sugar biosynthesis; UDP-N-acetyl-alpha-D-glucosamine biosynthesis; UDP-N-acetyl-alpha-D-glucosamine from N-acetyl-alpha-D-glucosamine 1-phosphate: step 1/1. It functions in the pathway bacterial outer membrane biogenesis; LPS lipid A biosynthesis. Functionally, catalyzes the last two sequential reactions in the de novo biosynthetic pathway for UDP-N-acetylglucosamine (UDP-GlcNAc). The C-terminal domain catalyzes the transfer of acetyl group from acetyl coenzyme A to glucosamine-1-phosphate (GlcN-1-P) to produce N-acetylglucosamine-1-phosphate (GlcNAc-1-P), which is converted into UDP-GlcNAc by the transfer of uridine 5-monophosphate (from uridine 5-triphosphate), a reaction catalyzed by the N-terminal domain. The protein is Bifunctional protein GlmU of Neisseria meningitidis serogroup A / serotype 4A (strain DSM 15465 / Z2491).